The primary structure comprises 296 residues: NADH-cytochrome b5 reductase 2 (296 aa).

Residues 2–24 (LVALAAIGVTVLLFLIKALGSGA) traverse the membrane as a helical segment. The region spanning 35-147 (NAKYPLPLIE…RGPNGLLVYK (113 aa)) is the FAD-binding FR-type domain. FAD is bound by residues 127 to 142 (DSLK…GPNG) and 166 to 201 (VAKH…KCYL).

Belongs to the flavoprotein pyridine nucleotide cytochrome reductase family. FAD is required as a cofactor.

The protein resides in the membrane. The enzyme catalyses 2 Fe(III)-[cytochrome b5] + NADH = 2 Fe(II)-[cytochrome b5] + NAD(+) + H(+). In terms of biological role, NADH-cytochrome b5 reductases are involved in desaturation and elongation of fatty acids, cholesterol biosynthesis and drug metabolism. This chain is NADH-cytochrome b5 reductase 2 (cyb5r2), found in Xenopus laevis (African clawed frog).